A 424-amino-acid chain; its full sequence is Putative fasciclin-like arabinogalactan protein 20 (424 aa).

The helical transmembrane segment at 46–66 (LLTTFFLIFFVLDIDLVATSM) threads the bilayer. The FAS1 1 domain maps to 56–194 (VLDIDLVATS…YVVIYGSDEF (139 aa)). N-linked (GlcNAc...) asparagine glycosylation is found at asparagine 153 and asparagine 160. Residues 199–226 (TKISDDSSSSSSIPSTTSSTGSIPIPSS) are compositionally biased toward low complexity. The tract at residues 199 to 246 (TKISDDSSSSSSIPSTTSSTGSIPIPSSATQTPPSPNIASDSTRNLPN) is disordered. The span at 227 to 246 (ATQTPPSPNIASDSTRNLPN) shows a compositional bias: polar residues. N-linked (GlcNAc...) asparagine glycosylation is found at asparagine 246, asparagine 283, and asparagine 287. Residues 250-384 (PVNRFNIFES…IAVHGFNQMI (135 aa)) form the FAS1 2 domain. Positions 405 to 424 (QEEEGVHGEYSSELGDYGLH) are disordered.

The protein belongs to the fasciclin-like AGP family.

It localises to the membrane. Functionally, may be a cell surface adhesion protein. The polypeptide is Putative fasciclin-like arabinogalactan protein 20 (FLA20) (Arabidopsis thaliana (Mouse-ear cress)).